A 649-amino-acid polypeptide reads, in one-letter code: Glucan endo-1,3-beta-glucosidase btgC (649 aa).

2 disordered regions span residues Met-1–His-50 and Tyr-110–Ala-224. Over Met-1 to Arg-274 the chain is Cytoplasmic. Positions Gly-144–Gly-157 are enriched in low complexity. Residues Asn-198–Asp-208 show a composition bias toward acidic residues. Residues Gly-275–Val-295 form a helical; Signal-anchor for type II membrane protein membrane-spanning segment. Residues Gly-296–Ala-649 lie on the Extracellular side of the membrane. The disordered stretch occupies residues Asn-301 to Ser-329. The segment covering Ser-314 to Gly-323 has biased composition (acidic residues). 3 N-linked (GlcNAc...) asparagine glycosylation sites follow: Asn-369, Asn-392, and Asn-420. Glu-452 acts as the Proton donor in catalysis. Residue Glu-551 is the Nucleophile of the active site. N-linked (GlcNAc...) asparagine glycosylation is present at Asn-596.

This sequence belongs to the glycosyl hydrolase 17 family.

It localises to the cell membrane. It catalyses the reaction Hydrolysis of (1-&gt;3)-beta-D-glucosidic linkages in (1-&gt;3)-beta-D-glucans.. Functionally, glucanases play a role in cell expansion during growth, in cell-cell fusion during mating, and in spore release during sporulation. This enzyme may be involved in beta-glucan degradation. Active on laminarin and lichenan. The chain is Glucan endo-1,3-beta-glucosidase btgC (btgC) from Emericella nidulans (strain FGSC A4 / ATCC 38163 / CBS 112.46 / NRRL 194 / M139) (Aspergillus nidulans).